The chain runs to 500 residues: Aspartyl/glutamyl-tRNA(Asn/Gln) amidotransferase subunit B (500 aa).

This sequence belongs to the GatB/GatE family. GatB subfamily. In terms of assembly, heterotrimer of A, B and C subunits.

The enzyme catalyses L-glutamyl-tRNA(Gln) + L-glutamine + ATP + H2O = L-glutaminyl-tRNA(Gln) + L-glutamate + ADP + phosphate + H(+). The catalysed reaction is L-aspartyl-tRNA(Asn) + L-glutamine + ATP + H2O = L-asparaginyl-tRNA(Asn) + L-glutamate + ADP + phosphate + 2 H(+). Allows the formation of correctly charged Asn-tRNA(Asn) or Gln-tRNA(Gln) through the transamidation of misacylated Asp-tRNA(Asn) or Glu-tRNA(Gln) in organisms which lack either or both of asparaginyl-tRNA or glutaminyl-tRNA synthetases. The reaction takes place in the presence of glutamine and ATP through an activated phospho-Asp-tRNA(Asn) or phospho-Glu-tRNA(Gln). The protein is Aspartyl/glutamyl-tRNA(Asn/Gln) amidotransferase subunit B of Brucella melitensis biotype 2 (strain ATCC 23457).